Here is a 380-residue protein sequence, read N- to C-terminus: Cytochrome b (380 aa).

4 helical membrane passes run 34–54 (FGSL…LLAA), 78–99 (WLIR…YMHV), 114–134 (WNTG…GYVL), and 179–199 (FFTL…IHLT). Heme b is bound by residues H84 and H98. Residues H183 and H197 each contribute to the heme b site. H202 contacts a ubiquinone. 4 consecutive transmembrane segments (helical) span residues 227 to 247 (LKDI…ALFS), 289 to 309 (LGGV…PLLH), 321 to 341 (LSQL…WVGS), and 348 to 368 (FMII…ILFP).

It belongs to the cytochrome b family. In terms of assembly, the cytochrome bc1 complex contains 11 subunits: 3 respiratory subunits (MT-CYB, CYC1 and UQCRFS1), 2 core proteins (UQCRC1 and UQCRC2) and 6 low-molecular weight proteins (UQCRH/QCR6, UQCRB/QCR7, UQCRQ/QCR8, UQCR10/QCR9, UQCR11/QCR10 and a cleavage product of UQCRFS1). This cytochrome bc1 complex then forms a dimer. Heme b is required as a cofactor.

The protein localises to the mitochondrion inner membrane. Its function is as follows. Component of the ubiquinol-cytochrome c reductase complex (complex III or cytochrome b-c1 complex) that is part of the mitochondrial respiratory chain. The b-c1 complex mediates electron transfer from ubiquinol to cytochrome c. Contributes to the generation of a proton gradient across the mitochondrial membrane that is then used for ATP synthesis. In Balearica pavonina (Black crowned-crane), this protein is Cytochrome b (MT-CYB).